A 525-amino-acid chain; its full sequence is Arylsulfatase G (525 aa).

The signal sequence occupies residues 1–16 (MGWLFLKVLLVGMAFS). Positions 44, 45, and 84 each coordinate Ca(2+). Cysteine 84 acts as the Nucleophile in catalysis. Cysteine 84 carries the post-translational modification 3-oxoalanine (Cys). N-linked (GlcNAc...) asparagine glycosylation occurs at asparagine 117. Lysine 137 contributes to the substrate binding site. Histidine 139 is a catalytic residue. Serine 162 serves as a coordination point for substrate. Asparagine 215 carries N-linked (GlcNAc...) asparagine glycosylation. Histidine 251 serves as a coordination point for substrate. Aspartate 302 and asparagine 303 together coordinate Ca(2+). Residues asparagine 356 and asparagine 497 are each glycosylated (N-linked (GlcNAc...) asparagine).

Belongs to the sulfatase family. Ca(2+) serves as cofactor. N-glycosylated with both high mannose and complex type sugars. Post-translationally, the conversion to 3-oxoalanine (also known as C-formylglycine, FGly), of a serine or cysteine residue in prokaryotes and of a cysteine residue in eukaryotes, is critical for catalytic activity. In terms of processing, the 63-kDa precursor undergoes proteolytic processing in two steps, yielding two fragments in the first step (apparent molecular masses of 44 and 18 kDa). In the second step, the 44-kDa fragment is processed further to the 34- and 10-kDa chains. The 10-kDa chain is a cleavage product of the 44-kDa fragment but linked to the 18-kDa chain through a disulfide bridge. In terms of tissue distribution, highly expressed in the spleen, kidney, liver, brain, and testis (at protein level).

It localises to the lysosome. The catalysed reaction is an aryl sulfate + H2O = a phenol + sulfate + H(+). It catalyses the reaction Hydrolysis of the 3-sulfate groups of the N-sulfo-D-glucosamine 3-O-sulfate units of heparin.. Displays arylsulfatase activity at acidic pH towards the artificial substrate p-nitrocatechol sulfate. Catalyzes the hydrolysis of the 3-sulfate groups of the N-sulfo-D-glucosamine 3-O-sulfate units of heparin. This is Arylsulfatase G (Arsg) from Mus musculus (Mouse).